Consider the following 182-residue polypeptide: ADP-ribosylation factor 3 (182 aa).

Gly-2 carries the N-myristoyl glycine lipid modification. GTP contacts are provided by residues 24–31 (GLDNAGKT), 67–71 (DLGGQ), and 126–129 (NKQD).

Belongs to the small GTPase superfamily. Arf family. In terms of assembly, interacts with GRIP; but preferentially when bound to GTP.

The protein resides in the golgi apparatus. Functionally, GTP-binding protein involved in protein trafficking; may modulate vesicle budding and uncoating within the Golgi apparatus. This is ADP-ribosylation factor 3 (ARF3) from Arabidopsis thaliana (Mouse-ear cress).